An 89-amino-acid chain; its full sequence is uncharacterized protein (89 aa).

The protein to M.tuberculosis Rv3402c.

This is an uncharacterized protein from Mycobacterium tuberculosis (strain CDC 1551 / Oshkosh).